Consider the following 123-residue polypeptide: Histone H1-like protein HC1 (123 aa).

Positions 54–123 (IKAEKSGLLK…KPSKARGFRK (70 aa)) are disordered. A compositionally biased stretch (basic residues) spans 61–75 (LLKRKPSTKAPAKVK). Over residues 85 to 102 (KSSAAAAKTSKAVKASKP) the composition is skewed to low complexity. Residues 103-123 (ASKKTAAKKVKKPSKARGFRK) are compositionally biased toward basic residues.

This sequence belongs to the histone H1/H5 family. HCT subfamily.

Functionally, might have a role analogous to that of eukaryotic histone proteins. The chain is Histone H1-like protein HC1 (hctA) from Chlamydia pneumoniae (Chlamydophila pneumoniae).